The following is a 430-amino-acid chain: Probable aspartic-type endopeptidase TRV_06366 (430 aa).

The first 17 residues, 1 to 17, serve as a signal peptide directing secretion; the sequence is MHVSTLLVAVLLPLALS. Positions 18–87 are cleaved as a propeptide — activation peptide; sequence KPTPRKKTSS…SKATAGSGKE (70 aa). Residues 61 to 104 are disordered; sequence HEMEGYHPQPISKLPGNSKATAGSGKEGVESQDEKGEVVNNPTD. Over residues 87–104 the composition is skewed to basic and acidic residues; the sequence is EGVESQDEKGEVVNNPTD. Residues 109–427 enclose the Peptidase A1 domain; it reads FLSPVTIGGQ…DQRGPSISLA (319 aa). The active site involves Asp-125. The N-linked (GlcNAc...) asparagine glycan is linked to Asn-306. Asp-314 is a catalytic residue.

This sequence belongs to the peptidase A1 family.

It localises to the secreted. Functionally, probable secreted aspartic-type endopeptidase which contributes to virulence. This is Probable aspartic-type endopeptidase TRV_06366 from Trichophyton verrucosum (strain HKI 0517).